The following is a 384-amino-acid chain: Somatostatin receptor type 4 (384 aa).

The tract at residues 1-34 (MNTPATLPLGGEDTTWTPGINASWAPDEEEDAVR) is disordered. At 1 to 41 (MNTPATLPLGGEDTTWTPGINASWAPDEEEDAVRSDGTGTA) the chain is on the extracellular side. An N-linked (GlcNAc...) asparagine glycan is attached at Asn-21. A helical transmembrane segment spans residues 42–69 (GMVTIQCIYALVCLVGLVGNALVIFVIL). Over 70 to 79 (RYAKMKTATN) the chain is Cytoplasmic. Residues 80 to 105 (IYLLNLAVADELFMLSVPFVASAAAL) form a helical membrane-spanning segment. Residues 106–116 (RHWPFGAVLCR) are Extracellular-facing. Cys-115 and Cys-194 are disulfide-bonded. Residues 117–138 (AVLSVDGLNMFTSVFCLTVLSV) traverse the membrane as a helical segment. Residues 139–160 (DRYVAVVHPLRAATYRRPSVAK) are Cytoplasmic-facing. A helical membrane pass occupies residues 161–181 (LINLGVWLASLLVTLPIAVFA). At 182–203 (DTRPARGGEAVACNLHWPHPAW) the chain is on the extracellular side. The chain crosses the membrane as a helical span at residues 204 to 228 (SAVFVIYTFLLGFLLPVLAIGLCYL). The Cytoplasmic portion of the chain corresponds to 229-254 (LIVGKMRAVALRAGWQQRRRSEKKIT). A helical membrane pass occupies residues 255–280 (RLVLMVVTVFVLCWMPFYVVQLLNLF). Topologically, residues 281-287 (VTSLDAT) are extracellular. The chain crosses the membrane as a helical span at residues 288-311 (VNHVSLILSYANSCANPILYGFLS). Residues 312 to 384 (DNFRRSFQRV…RVPFTKTTTF (73 aa)) are Cytoplasmic-facing. Cys-323 is lipidated: S-palmitoyl cysteine.

The protein belongs to the G-protein coupled receptor 1 family. In terms of tissue distribution, brain, lung, heart and islets. Moderate levels in the hippocampus, cortex and olfactory bulb.

It localises to the cell membrane. Its function is as follows. Receptor for somatostatin-14. The activity of this receptor is mediated by G proteins which inhibits adenylyl cyclase. It is functionally coupled not only to inhibition of adenylate cyclase, but also to activation of both arachidonate release and mitogen-activated protein (MAP) kinase cascade. This is Somatostatin receptor type 4 (Sstr4) from Rattus norvegicus (Rat).